Here is a 303-residue protein sequence, read N- to C-terminus: Pyridoxal 5'-phosphate synthase subunit PdxS (303 aa).

Asp-33 provides a ligand contact to D-ribose 5-phosphate. Lys-90 acts as the Schiff-base intermediate with D-ribose 5-phosphate in catalysis. Gly-162 is a D-ribose 5-phosphate binding site. Arg-174 is a D-glyceraldehyde 3-phosphate binding site. Residues Gly-223 and 244–245 contribute to the D-ribose 5-phosphate site; that span reads GS.

It belongs to the PdxS/SNZ family. As to quaternary structure, in the presence of PdxT, forms a dodecamer of heterodimers.

The enzyme catalyses aldehydo-D-ribose 5-phosphate + D-glyceraldehyde 3-phosphate + L-glutamine = pyridoxal 5'-phosphate + L-glutamate + phosphate + 3 H2O + H(+). It participates in cofactor biosynthesis; pyridoxal 5'-phosphate biosynthesis. In terms of biological role, catalyzes the formation of pyridoxal 5'-phosphate from ribose 5-phosphate (RBP), glyceraldehyde 3-phosphate (G3P) and ammonia. The ammonia is provided by the PdxT subunit. Can also use ribulose 5-phosphate and dihydroxyacetone phosphate as substrates, resulting from enzyme-catalyzed isomerization of RBP and G3P, respectively. This Streptomyces coelicolor (strain ATCC BAA-471 / A3(2) / M145) protein is Pyridoxal 5'-phosphate synthase subunit PdxS.